The sequence spans 530 residues: Vesicular acetylcholine transporter (530 aa).

At 1–33 (MEPTAPTGQARAAATKLSEAVGAALQEPQRQRR) the chain is on the cytoplasmic side. A helical membrane pass occupies residues 34–54 (LVLVIVCVALLLDNMLYMVIV). The Lumenal, vesicle segment spans residues 55-125 (PIVPDYIAHM…PTESEDVKIG (71 aa)). N-linked (GlcNAc...) asparagine glycans are attached at residues Asn89 and Asn96. A helical membrane pass occupies residues 126–146 (VLFASKAILQLLVNPLSGPFI). Topologically, residues 147–152 (DRMSYD) are cytoplasmic. Residues 153–173 (VPLLIGLGVMFASTVMFAFAE) form a helical membrane-spanning segment. Over 174 to 182 (DYATLFAAR) the chain is Lumenal, vesicle. Residues 183–203 (SLQGLGSAFADTSGIAMIADK) traverse the membrane as a helical segment. Over 204–213 (YPEEPERSRA) the chain is Cytoplasmic. Residues 214–234 (LGVALAFISFGSLVAPPFGGI) traverse the membrane as a helical segment. At 235-242 (LYEFAGKR) the chain is on the lumenal, vesicle side. A helical transmembrane segment spans residues 243–263 (VPFLVLAAVSLFDALLLLAVA). The Cytoplasmic segment spans residues 264-289 (KPFSAAARARANLPVGTPIHRLMLDP). A helical transmembrane segment spans residues 290 to 310 (YIAVVAGALTTCNIPLAFLEP). Topologically, residues 311 to 325 (TIATWMKHTMAASEW) are lumenal, vesicle. The helical transmembrane segment at 326–346 (EMGMVWLPAFVPHVLGVYLTV) threads the bilayer. Residues 347-356 (RLAARYPHLQ) are Cytoplasmic-facing. The helical transmembrane segment at 357 to 377 (WLYGALGLAVIGVSSCVVPAC) threads the bilayer. At 378–388 (RSFAPLVVSLC) the chain is on the lumenal, vesicle side. Residues 389 to 409 (GLCFGIALVDTALLPTLAFLV) form a helical membrane-spanning segment. Over 410-422 (DVRHVSVYGSVYA) the chain is Cytoplasmic. A helical membrane pass occupies residues 423 to 443 (IADISYSVAYALGPIVAGHIV). Residues 444–447 (HSLG) lie on the Lumenal, vesicle side of the membrane. A helical transmembrane segment spans residues 448–468 (FEQLSLGMGLANLLYAPVLLL). At 469–530 (LRNVGLLTRS…EDDYNYYSRS (62 aa)) the chain is on the cytoplasmic side. The segment at 471–530 (NVGLLTRSRSERDVLLDEPPQGLYDAVRLREVQGKDGGEPCSPPGPFDGCEDDYNYYSRS) is mediates interaction with SEC14L1. The tract at residues 504 to 530 (GKDGGEPCSPPGPFDGCEDDYNYYSRS) is disordered.

Belongs to the major facilitator superfamily. Vesicular transporter family. As to quaternary structure, interacts with SEC14L1. High expression in all major cholinergic cell groups, including peripheral postganglionic parasympathetic cells, preganglionic sympathetic and parasympathetic cells, ventral spinal cord and brainstem motoneurons, cell groups in the basal forebrain, the habenula and the corpus striatum. Weakly expressed in the cortex and hippocampus.

The protein resides in the cytoplasmic vesicle. It localises to the secretory vesicle. The protein localises to the synaptic vesicle membrane. The catalysed reaction is acetylcholine(out) + 2 H(+)(in) = acetylcholine(in) + 2 H(+)(out). It carries out the reaction choline(in) + 2 H(+)(out) = choline(out) + 2 H(+)(in). The enzyme catalyses serotonin(in) + 2 H(+)(out) = serotonin(out) + 2 H(+)(in). Potently inhibited by L-vesamicol. Functionally, electrogenic antiporter that exchanges one cholinergic neurotransmitter, acetylcholine or choline, with two intravesicular protons across the membrane of synaptic vesicles. Uses the electrochemical proton gradient established by the V-type proton-pump ATPase to store neurotransmitters inside the vesicles prior to their release via exocytosis. Determines cholinergic vesicular quantal size at presynaptic nerve terminals in developing neuro-muscular junctions with an impact on motor neuron differentiation and innervation pattern. Part of forebrain cholinergic system, regulates hippocampal synapse transmissions that underlie spatial memory formation. Can transport serotonin. In Rattus norvegicus (Rat), this protein is Vesicular acetylcholine transporter (Slc18a3).